The following is a 555-amino-acid chain: 4-coumarate--CoA ligase-like 9 (555 aa).

Ser200, Ser201, Gly202, Thr203, Thr204, and Lys208 together coordinate ATP. Tyr248 serves as a coordination point for (E)-4-coumaroyl-AMP. Arg269 contacts CoA. The interval 271–342 is SBD1; it reads DLRTFLRALV…RKFPGVQVEE (72 aa). Ala320 contacts (E)-4-coumaroyl-AMP. The ATP site is built by Glu342, Ala343, Thr347, Asp431, and Arg446. Residues Ala343 and Thr347 each coordinate (E)-4-coumaroyl-AMP. Residues 343-410 are SBD2; that stretch reads AYGLTEHSCI…VRSQSVMQGY (68 aa). Lys448 and Lys452 together coordinate (E)-4-coumaroyl-AMP. 2 residues coordinate CoA: Lys454 and Gly455. Lys537 lines the ATP pocket.

This sequence belongs to the ATP-dependent AMP-binding enzyme family. In terms of assembly, interacts with STS1. Requires Mg(2+) as cofactor.

The enzyme catalyses (E)-4-coumarate + ATP + CoA = (E)-4-coumaroyl-CoA + AMP + diphosphate. It carries out the reaction (E)-4-coumarate + ATP + H(+) = (E)-4-coumaroyl-AMP + diphosphate. It catalyses the reaction (E)-4-coumaroyl-AMP + CoA = (E)-4-coumaroyl-CoA + AMP + H(+). Its function is as follows. Carboxylate--CoA ligase that may use 4-coumarate as substrate. Follows a two-step reaction mechanism, wherein the carboxylate substrate first undergoes adenylation by ATP, followed by a thioesterification in the presence of CoA to yield the final CoA thioester. The polypeptide is 4-coumarate--CoA ligase-like 9 (4CLL9) (Oryza sativa subsp. japonica (Rice)).